Here is a 612-residue protein sequence, read N- to C-terminus: MFS siderochrome iron transporter B (612 aa).

Over methionine 1–glutamate 86 the chain is Cytoplasmic. A disordered region spans residues aspartate 55 to alanine 78. The span at histidine 60–alanine 72 shows a compositional bias: low complexity. The helical transmembrane segment at alanine 87–valine 104 threads the bilayer. The Extracellular segment spans residues asparagine 105–serine 127. Residues leucine 128–alanine 148 form a helical membrane-spanning segment. The Cytoplasmic segment spans residues lysine 149 to arginine 156. Residues alanine 157–serine 177 traverse the membrane as a helical segment. Over glutamine 178 to glutamine 187 the chain is Extracellular. Residues valine 188–valine 208 form a helical membrane-spanning segment. Over threonine 209–glycine 215 the chain is Cytoplasmic. Residues leucine 216 to alanine 236 form a helical membrane-spanning segment. Topologically, residues serine 237–arginine 246 are extracellular. A helical membrane pass occupies residues tryptophan 247 to leucine 267. Residues alanine 268 to aspartate 302 are Cytoplasmic-facing. A helical membrane pass occupies residues leucine 303–alanine 323. Over alanine 324–tyrosine 334 the chain is Extracellular. Residues isoleucine 335 to leucine 355 form a helical membrane-spanning segment. Topologically, residues valine 356–arginine 370 are cytoplasmic. A helical transmembrane segment spans residues threonine 371–leucine 393. The Extracellular portion of the chain corresponds to proline 394 to glycine 409. The helical transmembrane segment at tyrosine 410–isoleucine 430 threads the bilayer. Residues arginine 431–arginine 435 lie on the Cytoplasmic side of the membrane. A helical transmembrane segment spans residues phenylalanine 436–histidine 456. Over phenylalanine 457 to tyrosine 463 the chain is Extracellular. A helical transmembrane segment spans residues isoleucine 464–cysteine 484. At valine 485–valine 498 the chain is on the cytoplasmic side. A helical membrane pass occupies residues alanine 499–isoleucine 519. The Extracellular portion of the chain corresponds to cysteine 520–glutamine 575. The helical transmembrane segment at alanine 576–methionine 596 threads the bilayer. Residues arginine 597–valine 612 are Cytoplasmic-facing.

It belongs to the major facilitator superfamily.

The protein localises to the cell tip. It is found in the cytoplasmic vesicle membrane. Its subcellular location is the cell membrane. Functionally, major facilitator transporter involved in triacetylfusarinine C (TAFC) uptake. Can also transport ferricrocin and coprogen, but not ferrichrysin. MirB plays a crucial role for virulence in a murine model of pulmonary aspergillosis, indicating that TAFC-mediated iron uptake plays a dominant role during infection. In Aspergillus fumigatus (strain ATCC MYA-4609 / CBS 101355 / FGSC A1100 / Af293) (Neosartorya fumigata), this protein is MFS siderochrome iron transporter B.